We begin with the raw amino-acid sequence, 193 residues long: C-type lectin domain family 3 member A homolog (193 aa).

Positions 1–24 (MAQAGLLIWLFFTILLLDLTCTQS) are cleaved as a signal peptide. 3 disulfide bridges follow: Cys-66-Cys-76, Cys-93-Cys-188, and Cys-164-Cys-180. The C-type lectin domain occupies 72-189 (IHKKCYLSFE…CRSLKKYICE (118 aa)).

The protein resides in the secreted. The protein is C-type lectin domain family 3 member A homolog (clec3a) of Xenopus laevis (African clawed frog).